Here is a 344-residue protein sequence, read N- to C-terminus: Endoplasmic reticulum junction formation protein lunapark-1 (344 aa).

Residues 1-39 lie on the Cytoplasmic side of the membrane; sequence MGNLFSRTKSPATELERVVLSIEDFKKRLQTISASNSST. The chain crosses the membrane as a helical span at residues 40-60; the sequence is LYYYYMGVIIILSIAMAHTWL. Topologically, residues 61–68 are lumenal; the sequence is RFDDPTKT. Residues 69–89 form a helical membrane-spanning segment; sequence YVACALVFGATVIVLTGRYII. Over 90–344 the chain is Cytoplasmic; it reads NCFFAWRTNR…ADETAVVEKS (255 aa). A coiled-coil region spans residues 116–140; that stretch reads DLVKETLKFKEAKEILDRYEEKTEA. 2 disordered regions span residues 136-155 and 171-192; these read EKTE…HQQK and QKRV…IAFD. Residues 140 to 155 are compositionally biased toward polar residues; that stretch reads AGNTPTENSKLIHQQK. The C4-type; plays a role in ER morphology zinc-finger motif lies at 239 to 264; that stretch reads CSICHTHNGMSVPAEYPFISFRCFEC. The segment at 275 to 344 is disordered; it reads PHLPITRPPM…ADETAVVEKS (70 aa). Residues 312–326 show a composition bias toward polar residues; sequence PNPSTDLTPSASQHG. A compositionally biased stretch (basic and acidic residues) spans 327–344; sequence SDSEPEKNADETAVVEKS.

Belongs to the lunapark family.

Its subcellular location is the endoplasmic reticulum membrane. Plays a role in tubular endoplasmic reticulum network formation and maintenance. May be involved in central nervous system development. Has a presynaptic role in neurotransmission. Likely to operate in synaptogenesis by regulating vesicular transport or localization. Required for correct localization of rab-3 and snb-1. The chain is Endoplasmic reticulum junction formation protein lunapark-1 from Caenorhabditis briggsae.